The following is a 453-amino-acid chain: Probable glycine dehydrogenase (decarboxylating) subunit 1 (453 aa).

The protein belongs to the GcvP family. N-terminal subunit subfamily. The glycine cleavage system is composed of four proteins: P, T, L and H. In this organism, the P 'protein' is a heterodimer of two subunits.

It carries out the reaction N(6)-[(R)-lipoyl]-L-lysyl-[glycine-cleavage complex H protein] + glycine + H(+) = N(6)-[(R)-S(8)-aminomethyldihydrolipoyl]-L-lysyl-[glycine-cleavage complex H protein] + CO2. Functionally, the glycine cleavage system catalyzes the degradation of glycine. The P protein binds the alpha-amino group of glycine through its pyridoxal phosphate cofactor; CO(2) is released and the remaining methylamine moiety is then transferred to the lipoamide cofactor of the H protein. The polypeptide is Probable glycine dehydrogenase (decarboxylating) subunit 1 (Erythrobacter litoralis (strain HTCC2594)).